A 198-amino-acid chain; its full sequence is Nuclear transcription factor Y subunit A-4 (198 aa).

The disordered stretch occupies residues 1 to 47; sequence MTSSVHELSDNNESHAKKERPDSQTRPQVPSGRSSESIDTNSVYSEP. A compositionally biased stretch (basic and acidic residues) spans 7–23; sequence ELSDNNESHAKKERPDS. A compositionally biased stretch (polar residues) spans 24–44; that stretch reads QTRPQVPSGRSSESIDTNSVY. The short motif at 101 to 124 is the Subunit association domain (SAD) element; the sequence is FVNAKQYHGILRRRQSRAKLEARN. Residues 131–156 constitute a DNA-binding region (NFYA/HAP2-type); it reads KPYMHESRHLHAIRRPRGCGGRFLNA. Positions 136 to 198 are disordered; it reads ESRHLHAIRR…MATSGPNGRS (63 aa). Residues 156–166 are compositionally biased toward basic and acidic residues; that stretch reads AKKENGDHKEE.

The protein belongs to the NFYA/HAP2 subunit family. Heterotrimeric transcription factor composed of three components, NF-YA, NF-YB and NF-YC. NF-YB and NF-YC must interact and dimerize for NF-YA association and DNA binding. As to expression, expressed in stems, caulines, and senescent flowers.

Its subcellular location is the nucleus. Stimulates the transcription of various genes by recognizing and binding to a CCAAT motif in promoters. The sequence is that of Nuclear transcription factor Y subunit A-4 (NFYA4) from Arabidopsis thaliana (Mouse-ear cress).